The following is a 349-amino-acid chain: tRNA pseudouridine synthase D (349 aa).

Phe27 serves as a coordination point for substrate. The Nucleophile role is filled by Asp80. Asn129 contributes to the substrate binding site. In terms of domain architecture, TRUD spans 155 to 303; it reads GVPNYFGAQR…VEAARRAMLL (149 aa). Substrate is bound at residue Phe329.

This sequence belongs to the pseudouridine synthase TruD family.

The enzyme catalyses uridine(13) in tRNA = pseudouridine(13) in tRNA. Its function is as follows. Responsible for synthesis of pseudouridine from uracil-13 in transfer RNAs. In Enterobacter sp. (strain 638), this protein is tRNA pseudouridine synthase D.